A 120-amino-acid polypeptide reads, in one-letter code: Chaperonin GroEL (120 aa).

23 to 27 (DGTTT) is a binding site for ATP.

This sequence belongs to the chaperonin (HSP60) family. As to quaternary structure, forms a cylinder of 14 subunits composed of two heptameric rings stacked back-to-back. Interacts with the co-chaperonin GroES.

It is found in the cytoplasm. It carries out the reaction ATP + H2O + a folded polypeptide = ADP + phosphate + an unfolded polypeptide.. Together with its co-chaperonin GroES, plays an essential role in assisting protein folding. The GroEL-GroES system forms a nano-cage that allows encapsulation of the non-native substrate proteins and provides a physical environment optimized to promote and accelerate protein folding. The sequence is that of Chaperonin GroEL from Mycolicibacterium chitae (Mycobacterium chitae).